The primary structure comprises 80 residues: Adipogenin (80 aa).

The helical transmembrane segment at 16 to 36 (FLVFWLCLPVALLLFLTIVWL) threads the bilayer. A Phosphoserine modification is found at Ser63.

Belongs to the adipogenin family. As to expression, selectively expressed in adipose tissue where it is particularly enriched in brown adipose tissue. In adipose tissue, expressed exclusively in adipocytes and not in the stromal-vascular cell population. Expressed at much lower levels in heart, stomach and muscle and barely detected in kidney and lung.

It localises to the membrane. The protein resides in the nucleus. Its function is as follows. Plays a role in stimulating adipocyte differentiation and development. The polypeptide is Adipogenin (Adig) (Mus musculus (Mouse)).